Reading from the N-terminus, the 405-residue chain is N-methyltransferase nanE (405 aa).

S-adenosyl-L-methionine-binding positions include 238-239 (GG), Asp261, and 290-291 (HH).

The protein belongs to the class I-like SAM-binding methyltransferase superfamily. Cation-independent O-methyltransferase family.

It functions in the pathway secondary metabolite biosynthesis. Its function is as follows. N-methyltransferase; part of the gene cluster that mediates the biosynthesis of the benzazepine alkaloid nanangelenin A which contains an unprecedented 3,4-dihydro-1-benzazepine-2,5-dione-N-prenyl-N-acetoxy-anthranilamide scaffold. The first step of nanangelenin biosynthesis is catalyzed by the indoleamine 2,3-dioxygenase nanC which produces N-formyl-kynurenine through the catabolism of tryptophan. The two-module NRPS nanA then utilizes anthranilate (Ant) and L-kynurenine (L-Kyn) to assemble the dipeptide product nanangelenin B. The first adenylation domain of nanA (A1) loads anthranilate onto the T1 domain, while A2 loads kynurenine, generated through spontaneous nonenzymatic deformylation of the nanC-supplied N-formyl-kynurenine. The peptide bond formation between the tethered amino acids is catalyzed by the first condensation domain (C1) between anthranilate's carbonyl carbon and kynurenine's aliphatic primary amine. The second C domain (C2) catalyzes the final cyclization event between the aromatic amine of kynurenine and the tethered carbonyl carbon, yielding nanangelenin B. The terminal T3 domain enhances the catalytic efficiency of C2, suggesting the T2-tethered Ant-L-Kyn is transferred to T3 prior to cyclization by C2. Once released from nanA, nanangelenin B is then prenylated by the prenyltransferase nanD to form nanangelenin C. Nanangelenin C is then N-hydroxylated by the FAD-dependent monooxygenase nanF and further acetylated by the acetyltransferase nanB to yield nanangelenin F. Finally, the N-methyltransferase nanE methylates the amide nitrogen of 1-benzazepine to convert nanangelenin F into nanangelenin A. NanE is also able to methylate most of the intermediates of the pathway such as nanangelenin B and nanangelenin C to produce nanangelenin D and nanangelenin E, respectively. The sequence is that of N-methyltransferase nanE from Aspergillus nanangensis.